We begin with the raw amino-acid sequence, 267 residues long: Exosome complex component Rrp42 (267 aa).

The protein belongs to the RNase PH family. Rrp42 subfamily. In terms of assembly, component of the archaeal exosome complex. Forms a hexameric ring-like arrangement composed of 3 Rrp41-Rrp42 heterodimers. The hexameric ring associates with a trimer of Rrp4 and/or Csl4 subunits.

Its subcellular location is the cytoplasm. Non-catalytic component of the exosome, which is a complex involved in RNA degradation. Contributes to the structuring of the Rrp41 active site. The protein is Exosome complex component Rrp42 of Methanopyrus kandleri (strain AV19 / DSM 6324 / JCM 9639 / NBRC 100938).